The chain runs to 61 residues: Metallothionein-2E (61 aa).

Met-1 is modified (N-acetylmethionine). The segment at 1–29 (MDPNCSCATRDSCACASSCKCKECKCTSC) is beta. Residues Cys-5, Cys-7, Cys-13, Cys-15, Cys-19, Cys-21, Cys-24, Cys-26, Cys-29, Cys-33, Cys-34, Cys-36, Cys-37, Cys-41, Cys-44, Cys-48, Cys-50, Cys-57, Cys-59, and Cys-60 each contribute to the a divalent metal cation site. Positions 30 to 61 (KKSCCSCCPAGCTKCAQGCICKGALDKCSCCA) are alpha.

This sequence belongs to the metallothionein superfamily. Type 1 family. As to quaternary structure, monomer.

Its function is as follows. Metallothioneins have a high content of cysteine residues that bind various heavy metals; these proteins are transcriptionally regulated by both heavy metals and glucocorticoids. This chain is Metallothionein-2E, found in Oryctolagus cuniculus (Rabbit).